The sequence spans 874 residues: Oxidation resistance protein 1 (874 aa).

A disordered region spans residues Met-1–Arg-89. A compositionally biased stretch (basic and acidic residues) spans Arg-64–Arg-89. Residue Ser-91 is modified to Phosphoserine. The region spanning Ile-99–Val-142 is the LysM domain. Thr-119 carries the phosphothreonine modification. A compositionally biased stretch (low complexity) spans Val-151–Glu-169. The segment at Val-151 to Ile-194 is disordered. Ser-201, Ser-202, and Ser-204 each carry phosphoserine. Residues Glu-208–Lys-275 enclose the GRAM domain. Ser-294, Ser-334, and Ser-336 each carry phosphoserine. Disordered stretches follow at residues Cys-299 to Val-406 and Phe-431 to Ala-537. Thr-341 is modified (phosphothreonine). Ser-346 is subject to Phosphoserine. The segment covering Pro-347–Lys-362 has biased composition (basic and acidic residues). Residues Ser-363–Thr-391 show a composition bias toward polar residues. Residues Ser-452–Lys-466 are compositionally biased toward basic and acidic residues. Position 496 is a phosphoserine (Ser-496). Residues His-510 to Gln-527 are compositionally biased toward polar residues. A mediates oxidative antimutator activity region spans residues Gln-551–Thr-578. The 162-residue stretch at Glu-713–Glu-874 folds into the TLDc domain.

Belongs to the OXR1 family.

The protein localises to the mitochondrion. Functionally, may be involved in protection from oxidative damage. This chain is Oxidation resistance protein 1 (OXR1), found in Homo sapiens (Human).